Reading from the N-terminus, the 206-residue chain is Alpha-amylase/trypsin inhibitor (206 aa).

Cystine bridges form between Cys-9/Cys-205, Cys-51/Cys-61, Cys-66/Cys-72, Cys-118/Cys-194, Cys-124/Cys-177, Cys-132/Cys-142, Cys-146/Cys-155, and Cys-156/Cys-164.

This sequence belongs to the thaumatin family.

Its function is as follows. Inhibits both trypsin and alpha-amylase. Inhibits the growth of some plant fungal pathogens. The sequence is that of Alpha-amylase/trypsin inhibitor from Zea mays (Maize).